A 314-amino-acid polypeptide reads, in one-letter code: 2,3-dihydroxyphenylpropionate/2,3-dihydroxicinnamic acid 1,2-dioxygenase (314 aa).

His115 (proton donor) is an active-site residue. The Proton acceptor role is filled by His179.

The protein belongs to the LigB/MhpB extradiol dioxygenase family. As to quaternary structure, homotetramer. The cofactor is Fe(2+).

The catalysed reaction is 3-(2,3-dihydroxyphenyl)propanoate + O2 = (2Z,4E)-2-hydroxy-6-oxonona-2,4-dienedioate + H(+). It catalyses the reaction (2E)-3-(2,3-dihydroxyphenyl)prop-2-enoate + O2 = (2Z,4E,7E)-2-hydroxy-6-oxonona-2,4,7-trienedioate + H(+). It participates in aromatic compound metabolism; 3-phenylpropanoate degradation. Functionally, catalyzes the non-heme iron(II)-dependent oxidative cleavage of 2,3-dihydroxyphenylpropionic acid and 2,3-dihydroxicinnamic acid into 2-hydroxy-6-ketononadienedioate and 2-hydroxy-6-ketononatrienedioate, respectively. In Cupriavidus pinatubonensis (strain JMP 134 / LMG 1197) (Cupriavidus necator (strain JMP 134)), this protein is 2,3-dihydroxyphenylpropionate/2,3-dihydroxicinnamic acid 1,2-dioxygenase.